An 896-amino-acid polypeptide reads, in one-letter code: Alanine--tRNA ligase (896 aa).

Positions 580, 584, 683, and 687 each coordinate Zn(2+).

It belongs to the class-II aminoacyl-tRNA synthetase family. Requires Zn(2+) as cofactor.

The protein resides in the cytoplasm. The catalysed reaction is tRNA(Ala) + L-alanine + ATP = L-alanyl-tRNA(Ala) + AMP + diphosphate. Functionally, catalyzes the attachment of alanine to tRNA(Ala) in a two-step reaction: alanine is first activated by ATP to form Ala-AMP and then transferred to the acceptor end of tRNA(Ala). Also edits incorrectly charged Ser-tRNA(Ala) and Gly-tRNA(Ala) via its editing domain. This is Alanine--tRNA ligase from Mycolicibacterium smegmatis (strain ATCC 700084 / mc(2)155) (Mycobacterium smegmatis).